We begin with the raw amino-acid sequence, 359 residues long: 3-dehydroquinate synthase (359 aa).

Residues 70 to 75 (DGEQYK), 105 to 109 (GVIGD), 129 to 130 (TT), Lys142, Lys151, and 169 to 172 (FYKT) contribute to the NAD(+) site. Zn(2+)-binding residues include Glu184, His247, and His264.

This sequence belongs to the sugar phosphate cyclases superfamily. Dehydroquinate synthase family. Requires Co(2+) as cofactor. The cofactor is Zn(2+). NAD(+) serves as cofactor.

The protein resides in the cytoplasm. It catalyses the reaction 7-phospho-2-dehydro-3-deoxy-D-arabino-heptonate = 3-dehydroquinate + phosphate. The protein operates within metabolic intermediate biosynthesis; chorismate biosynthesis; chorismate from D-erythrose 4-phosphate and phosphoenolpyruvate: step 2/7. In terms of biological role, catalyzes the conversion of 3-deoxy-D-arabino-heptulosonate 7-phosphate (DAHP) to dehydroquinate (DHQ). The protein is 3-dehydroquinate synthase of Francisella tularensis subsp. holarctica (strain OSU18).